The primary structure comprises 36 residues: Photosystem I reaction center subunit VIII (36 aa).

A helical transmembrane segment spans residues Leu6–Leu26.

Belongs to the PsaI family.

It localises to the plastid. The protein resides in the chloroplast thylakoid membrane. May help in the organization of the PsaL subunit. In Liriodendron tulipifera (Tuliptree), this protein is Photosystem I reaction center subunit VIII.